Consider the following 243-residue polypeptide: MSATDRYSHQLLYATVRQRLLDDIAQGVYQAGQQIPTENELCTQYNVSRITIRKAISDLVADGVLIRWQGKGTFVQSQKVENALLTVSGFTDFGVSQGKATKEKVIEQERVSAAPFCEKLNIPGNSEVFHLCRVMYLDKEPLFIDSSWIPLSRYPDFDEIYVEGSSTYQLFQERFDTRVVSDKKTIDIFAATRPQAKWLKCELGEPLFRISKIAFDQNDKPVHVSELFCRANRITLTIDNKRH.

Positions 10 to 78 constitute an HTH gntR-type domain; that stretch reads QLLYATVRQR…QGKGTFVQSQ (69 aa). Positions 38–57 form a DNA-binding region, H-T-H motif; the sequence is ENELCTQYNVSRITIRKAIS.

It participates in carbohydrate metabolism; fructoselysine degradation [regulation]. Its function is as follows. May regulate the transcription of the frlABCDR operon, involved in the utilization of fructoselysine and psicoselysine. This is Probable fructoselysine utilization operon transcriptional repressor from Escherichia coli (strain K12).